Reading from the N-terminus, the 511-residue chain is Lysine--tRNA ligase 2 (511 aa).

The interval 1–22 is disordered; it reads MTMEINNTDPFEKMPLPDDSGL. 2 residues coordinate Mg(2+): E421 and E428.

The protein belongs to the class-II aminoacyl-tRNA synthetase family. As to quaternary structure, homodimer. Mg(2+) serves as cofactor.

The protein localises to the cytoplasm. It catalyses the reaction tRNA(Lys) + L-lysine + ATP = L-lysyl-tRNA(Lys) + AMP + diphosphate. In Methanosarcina mazei (strain ATCC BAA-159 / DSM 3647 / Goe1 / Go1 / JCM 11833 / OCM 88) (Methanosarcina frisia), this protein is Lysine--tRNA ligase 2.